A 308-amino-acid chain; its full sequence is MAGGRDRGDLAARQLVFLLPEHLKDASKKKKKSSLLFVKLANPHSGEGATYLIDMCLQQLFEIKVFKEKHHSWFINQSVQSGGLLHFATPMDPLFLLLHYLLKAGKEGKYQPLDQVVVDDTFPDCTLLLRFPELEKSLRHVTEEKEVNSKKYYKYSSEKTLKWLEKKVNQTVVALKANNVNVGARVQSSAYFSGGQVSRDKEEDYVRYAHGLISDYIPKELSDDLSKFLKLPEPPASLTNPPSKKLKLSDEPVEAKEDYTKFNTKDLKTGKKNSKMTAAQKALAKVDKSGMKSIDAFFGAKNKKTGKI.

Alanine 2 carries the post-translational modification N-acetylalanine. Lysine 292 carries the N6-acetyllysine modification. The residue at position 293 (serine 293) is a Phosphoserine.

Belongs to the RNase H2 subunit B family. In terms of assembly, the RNase H2 complex is a heterotrimer composed of the catalytic subunit RNASEH2A and the non-catalytic subunits RNASEH2B and RNASEH2C.

It localises to the nucleus. Functionally, non catalytic subunit of RNase H2, an endonuclease that specifically degrades the RNA of RNA:DNA hybrids. Participates in DNA replication, possibly by mediating the removal of lagging-strand Okazaki fragment RNA primers during DNA replication. Mediates the excision of single ribonucleotides from DNA:RNA duplexes. This is Ribonuclease H2 subunit B (Rnaseh2b) from Mus musculus (Mouse).